The following is a 375-amino-acid chain: 23S rRNA (uracil(747)-C(5))-methyltransferase RlmC (375 aa).

[4Fe-4S] cluster contacts are provided by cysteine 3, cysteine 11, cysteine 14, and cysteine 87. S-adenosyl-L-methionine contacts are provided by glutamine 212, phenylalanine 241, glutamate 262, and asparagine 307. Catalysis depends on cysteine 334, which acts as the Nucleophile.

It belongs to the class I-like SAM-binding methyltransferase superfamily. RNA M5U methyltransferase family. RlmC subfamily.

It carries out the reaction uridine(747) in 23S rRNA + S-adenosyl-L-methionine = 5-methyluridine(747) in 23S rRNA + S-adenosyl-L-homocysteine + H(+). Its function is as follows. Catalyzes the formation of 5-methyl-uridine at position 747 (m5U747) in 23S rRNA. The polypeptide is 23S rRNA (uracil(747)-C(5))-methyltransferase RlmC (Salmonella agona (strain SL483)).